A 246-amino-acid polypeptide reads, in one-letter code: FAD synthetase (246 aa).

It belongs to the RibF family.

The enzyme catalyses FMN + ATP + H(+) = FAD + diphosphate. It functions in the pathway cofactor biosynthesis; FAD biosynthesis; FAD from FMN: step 1/1. Catalyzes the adenylation of flavin mononucleotide (FMN) to form flavin adenine dinucleotide (FAD) coenzyme. Can also catalyze, with lower efficiency, the adenylation of the toxic riboflavin analogs 8-demethyl-8-aminoriboflavin mononucleotide (AFMN) and roseoflavin mononucleotide (RoFMN) to 8-demethyl-8-aminoriboflavin adenine dinucleotide (AFAD) and roseoflavin adenine dinucleotide (RoFAD), respectively. This is FAD synthetase from Listeria monocytogenes serovar 1/2a (strain ATCC BAA-679 / EGD-e).